A 281-amino-acid chain; its full sequence is Acidic leucine-rich nuclear phosphoprotein 32-related protein (281 aa).

LRR repeat units lie at residues 29 to 52 (YESL…EKEL), 56 to 78 (FKNL…IPSI), 79 to 103 (ATLN…IVQN), and 105 to 128 (PNIK…TLKE). The region spanning 140–178 (NPFADNPNYRKELFEFLPNVKIIDCYNKEGMEVLSSDEE) is the LRRCT domain. Residues 197–244 (FKDEDDEDEEFVPNDNEDDDEDDELDDDLEDEDMEDLDKEDLDKEDYD) are compositionally biased toward acidic residues. Residues 197–281 (FKDEDDEDEE…DMDLKKTKLE (85 aa)) form a disordered region. Residues 245–266 (IDTKETEGVNKDEKSNKRKQDA) show a composition bias toward basic and acidic residues.

The protein belongs to the ANP32 family.

The chain is Acidic leucine-rich nuclear phosphoprotein 32-related protein from Plasmodium falciparum (isolate 3D7).